The chain runs to 800 residues: Phenylalanine--tRNA ligase beta subunit (800 aa).

The tRNA-binding domain maps to 39 to 154 (TKDIKNLVVG…ESQVPGTDAL (116 aa)). The B5 domain occupies 408–483 (AFITPIDITA…RIYGYDDIPS (76 aa)). Mg(2+) contacts are provided by Asp-461, Asp-467, Glu-470, and Glu-471. The FDX-ACB domain occupies 708–800 (PRFPGMSRDI…ALIEQGAVIR (93 aa)).

It belongs to the phenylalanyl-tRNA synthetase beta subunit family. Type 1 subfamily. As to quaternary structure, tetramer of two alpha and two beta subunits. Mg(2+) is required as a cofactor.

It is found in the cytoplasm. The catalysed reaction is tRNA(Phe) + L-phenylalanine + ATP = L-phenylalanyl-tRNA(Phe) + AMP + diphosphate + H(+). The protein is Phenylalanine--tRNA ligase beta subunit of Staphylococcus aureus (strain MRSA252).